A 777-amino-acid polypeptide reads, in one-letter code: Subtilisin-like protease SBT1.4 (777 aa).

A signal peptide spans 1–25; sequence MAKLSLSSIFFVFPLLLCFFSPSSS. Residues 26–110 constitute a propeptide, activation peptide; that stretch reads SSDGLESYIV…VIPDQAREIH (85 aa). The 79-residue stretch at 32-110 folds into the Inhibitor I9 domain; that stretch reads SYIVHVQRSH…VIPDQAREIH (79 aa). The 500-residue stretch at 115–614 folds into the Peptidase S8 domain; that stretch reads PAFLGFSQNS…AGHVDPNKAL (500 aa). Catalysis depends on Asp142, which acts as the Charge relay system. Asn198 carries an N-linked (GlcNAc...) asparagine glycan. Positions 199 to 223 are disordered; that stretch reads GTKKHAAKESRSPRDTEGHGTHTAS. The span at 205–218 shows a compositional bias: basic and acidic residues; sequence AKESRSPRDTEGHG. The active-site Charge relay system is the His217. N-linked (GlcNAc...) asparagine glycans are attached at residues Asn232 and Asn395. Positions 376 to 461 constitute a PA domain; sequence LSLVYSGDCG…VGAKAGDQIR (86 aa). The active-site Charge relay system is the Ser546.

Belongs to the peptidase S8 family.

It is found in the secreted. The sequence is that of Subtilisin-like protease SBT1.4 from Arabidopsis thaliana (Mouse-ear cress).